The chain runs to 642 residues: Threonine--tRNA ligase (642 aa).

Positions 1 to 61 constitute a TGS domain; it reads MIKVTFPDGN…EHDGKLQLLT (61 aa). Residues 240–539 form a catalytic region; the sequence is DHRKIGKDLD…LIEEYKGSFP (300 aa). The Zn(2+) site is built by Cys334, His385, and His516.

Belongs to the class-II aminoacyl-tRNA synthetase family. As to quaternary structure, homodimer. Zn(2+) serves as cofactor.

The protein localises to the cytoplasm. It catalyses the reaction tRNA(Thr) + L-threonine + ATP = L-threonyl-tRNA(Thr) + AMP + diphosphate + H(+). Catalyzes the attachment of threonine to tRNA(Thr) in a two-step reaction: L-threonine is first activated by ATP to form Thr-AMP and then transferred to the acceptor end of tRNA(Thr). Also edits incorrectly charged L-seryl-tRNA(Thr). The chain is Threonine--tRNA ligase from Acholeplasma laidlawii (strain PG-8A).